The following is a 356-amino-acid chain: AT-hook motif nuclear-localized protein 1 (356 aa).

A disordered region spans residues 1-127 (MVLNMESTGE…PSHLPPPSSH (127 aa)). The span at 49–66 (VTPPPPQPSSHHTAPPPL) shows a compositional bias: pro residues. Residues 88-97 (MKKKRGRPRK) are compositionally biased toward basic residues. The short motif at 89–97 (KKKRGRPRK) is the Bipartite nuclear localization signal element. The segment at residues 89–101 (KKKRGRPRKYGPD) is a DNA-binding region (a.T hook). Residues 106–118 (ALSPKPISSAPAP) show a composition bias toward low complexity. In terms of domain architecture, PPC spans 167 to 309 (GGNFTPHIIT…KHDFMLSSPT (143 aa)). Residues 270–287 (GLLVAASPVQVVVGSFLA) are required for nuclear localization. A Nuclear localization signal motif is present at residues 295-302 (KPKKNKHD).

It is found in the nucleus. The protein resides in the nucleoplasm. Its subcellular location is the chromosome. In terms of biological role, transcription factor that specifically binds AT-rich DNA sequences related to the nuclear matrix attachment regions (MARs). May play a function in the positioning of chromatin fibers within the nucleus. This chain is AT-hook motif nuclear-localized protein 1, found in Arabidopsis thaliana (Mouse-ear cress).